Here is a 337-residue protein sequence, read N- to C-terminus: Ornithine carbamoyltransferase (337 aa).

Carbamoyl phosphate is bound by residues 56–59 (STRT), Q83, R107, and 134–137 (HPTQ). L-ornithine is bound by residues N168, D232, and 236 to 237 (SM). Carbamoyl phosphate contacts are provided by residues 274–275 (CL) and R320.

It belongs to the aspartate/ornithine carbamoyltransferase superfamily. OTCase family.

It localises to the cytoplasm. It carries out the reaction carbamoyl phosphate + L-ornithine = L-citrulline + phosphate + H(+). It functions in the pathway amino-acid biosynthesis; L-arginine biosynthesis; L-arginine from L-ornithine and carbamoyl phosphate: step 1/3. In terms of biological role, reversibly catalyzes the transfer of the carbamoyl group from carbamoyl phosphate (CP) to the N(epsilon) atom of ornithine (ORN) to produce L-citrulline. The polypeptide is Ornithine carbamoyltransferase (argI) (Shigella flexneri).